The following is a 237-amino-acid chain: Proteasome subunit alpha type-5-B (237 aa).

Residue M1 is modified to N-acetylmethionine. Residues K43, K66, and K185 each participate in a glycyl lysine isopeptide (Lys-Gly) (interchain with G-Cter in ubiquitin) cross-link.

Belongs to the peptidase T1A family. As to quaternary structure, component of the 20S core complex of the 26S proteasome. The 26S proteasome is composed of a core protease (CP), known as the 20S proteasome, capped at one or both ends by the 19S regulatory particle (RP/PA700). The 20S proteasome core is composed of 28 subunits that are arranged in four stacked rings, resulting in a barrel-shaped structure. The two end rings are each formed by seven alpha subunits, and the two central rings are each formed by seven beta subunits. The catalytic chamber with the active sites is on the inside of the barrel.

The protein localises to the cytoplasm. Its subcellular location is the nucleus. In terms of biological role, the proteasome is a multicatalytic proteinase complex which is characterized by its ability to cleave peptides with Arg, Phe, Tyr, Leu, and Glu adjacent to the leaving group at neutral or slightly basic pH. The proteasome has an ATP-dependent proteolytic activity. The chain is Proteasome subunit alpha type-5-B (PAE2) from Arabidopsis thaliana (Mouse-ear cress).